Reading from the N-terminus, the 157-residue chain is Ribosome maturation factor RimP (157 aa).

The protein belongs to the RimP family.

The protein localises to the cytoplasm. Functionally, required for maturation of 30S ribosomal subunits. The chain is Ribosome maturation factor RimP from Geobacillus kaustophilus (strain HTA426).